The primary structure comprises 128 residues: Ribonuclease P protein component (128 aa).

Belongs to the RnpA family. As to quaternary structure, consists of a catalytic RNA component (M1 or rnpB) and a protein subunit.

The enzyme catalyses Endonucleolytic cleavage of RNA, removing 5'-extranucleotides from tRNA precursor.. In terms of biological role, RNaseP catalyzes the removal of the 5'-leader sequence from pre-tRNA to produce the mature 5'-terminus. It can also cleave other RNA substrates such as 4.5S RNA. The protein component plays an auxiliary but essential role in vivo by binding to the 5'-leader sequence and broadening the substrate specificity of the ribozyme. This is Ribonuclease P protein component from Mycoplasma genitalium (strain ATCC 33530 / DSM 19775 / NCTC 10195 / G37) (Mycoplasmoides genitalium).